The sequence spans 359 residues: GATA-binding factor 1-A (359 aa).

Residues 1–21 (MDYTTLTTQDPDPNYTESGLA) form a disordered region. 2 GATA-type zinc fingers span residues 178 to 202 (CVNC…CNAC) and 232 to 256 (CSNC…CNAC). Disordered stretches follow at residues 271–311 (MKKE…SPYP) and 323–359 (PMGH…VTPP). Over residues 279-291 (RNRKVSSRSKKKK) the composition is skewed to basic residues.

In terms of tissue distribution, expressed in the developing ventral blood island, and in both tadpole and adult erythrocytes.

The protein resides in the nucleus. Transcription factor that acts synergistically with tal1/scl and lmo2 to specify embryonic dorsal mesoderm to a hematopoietic fate. In Xenopus laevis (African clawed frog), this protein is GATA-binding factor 1-A (gata1-a).